The chain runs to 604 residues: Aspartate--tRNA(Asp/Asn) ligase (604 aa).

L-aspartate is bound at residue Glu-177. Residues 201–204 form an aspartate region; the sequence is QLFK. An L-aspartate-binding site is contributed by Arg-223. ATP is bound by residues 223–225 and Gln-232; that span reads RDE. His-457 lines the L-aspartate pocket. Residue Glu-495 coordinates ATP. Residue Arg-502 coordinates L-aspartate. ATP is bound at residue 547–550; sequence GLDR.

This sequence belongs to the class-II aminoacyl-tRNA synthetase family. Type 1 subfamily. In terms of assembly, homodimer.

The protein resides in the cytoplasm. The enzyme catalyses tRNA(Asx) + L-aspartate + ATP = L-aspartyl-tRNA(Asx) + AMP + diphosphate. Its function is as follows. Aspartyl-tRNA synthetase with relaxed tRNA specificity since it is able to aspartylate not only its cognate tRNA(Asp) but also tRNA(Asn). Reaction proceeds in two steps: L-aspartate is first activated by ATP to form Asp-AMP and then transferred to the acceptor end of tRNA(Asp/Asn). This chain is Aspartate--tRNA(Asp/Asn) ligase, found in Synechococcus sp. (strain RCC307).